The following is a 460-amino-acid chain: Keratin, type I cytoskeletal 27 (460 aa).

The tract at residues 1 to 83 (MSVRFSSASR…GNEHGLLSGN (83 aa)) is head. The tract at residues 84-119 (EKVTMQNLNDRLASYLDNVRALEEANADLEQKIKGW) is coil 1A. The 316-residue stretch at 84–399 (EKVTMQNLND…RLIDGEDGSC (316 aa)) folds into the IF rod domain. The segment at 120 to 141 (YEKFGPGSCRGLDHDYSRYFTV) is linker 1. Residues 142–233 (IDDLRNQIIS…KNHEEEMKAL (92 aa)) are coil 1B. Residues 234-256 (QCAAGGNVNVEMNAAPGVDLTVL) form a linker 12 region. The coil 2 stretch occupies residues 257–395 (LNNMRAEYEA…ETYCRLIDGE (139 aa)). The tail stretch occupies residues 396–460 (DGSCAKSKGY…NVKSEQRVPS (65 aa)). A disordered region spans residues 435-460 (LSSRVHSVEEKSTKVNNVKSEQRVPS). Residues 448 to 460 (KVNNVKSEQRVPS) show a composition bias toward polar residues.

Belongs to the intermediate filament family. Heterotetramer of two type I and two type II keratins. Interacts with KRT6A to form filaments.

The protein localises to the cytoplasm. Functionally, essential for the proper assembly of type I and type II keratin protein complexes and formation of keratin intermediate filaments in the inner root sheath (irs). The chain is Keratin, type I cytoskeletal 27 from Bos taurus (Bovine).